A 269-amino-acid chain; its full sequence is Diaminopimelate epimerase (269 aa).

Substrate-binding residues include Asn-15 and Asn-66. The Proton donor role is filled by Cys-75. Residues 76 to 77 (GN), Asn-152, Asn-185, and 203 to 204 (ER) contribute to the substrate site. Cys-212 (proton acceptor) is an active-site residue. 213–214 (GT) serves as a coordination point for substrate.

This sequence belongs to the diaminopimelate epimerase family. In terms of assembly, homodimer.

The protein localises to the cytoplasm. The enzyme catalyses (2S,6S)-2,6-diaminopimelate = meso-2,6-diaminopimelate. It functions in the pathway amino-acid biosynthesis; L-lysine biosynthesis via DAP pathway; DL-2,6-diaminopimelate from LL-2,6-diaminopimelate: step 1/1. In terms of biological role, catalyzes the stereoinversion of LL-2,6-diaminopimelate (L,L-DAP) to meso-diaminopimelate (meso-DAP), a precursor of L-lysine and an essential component of the bacterial peptidoglycan. The polypeptide is Diaminopimelate epimerase (Parabacteroides distasonis (strain ATCC 8503 / DSM 20701 / CIP 104284 / JCM 5825 / NCTC 11152)).